Reading from the N-terminus, the 455-residue chain is Beta-1,4-mannosyltransferase bre-3 (455 aa).

This sequence belongs to the glycosyltransferase 2 family.

The protein localises to the cytoplasm. It participates in protein modification; protein glycosylation. In terms of biological role, glycosyltransferase with a proposed role in glycosphingolipid biosynthesis. Involved in susceptibility to pore-forming crystal toxins in conjunction with bre-1, bre-2 and bre-4. Involved in resistance to the nematotoxic C.cinerea galectin Cgl2. Has a role in determining brood size. The sequence is that of Beta-1,4-mannosyltransferase bre-3 from Caenorhabditis briggsae.